A 409-amino-acid chain; its full sequence is tRNA(Met) cytidine acetate ligase (409 aa).

ATP contacts are provided by residues 7-20, Gly102, Asn169, and Arg194; that span reads VVEY…HLYH.

It belongs to the TmcAL family.

The protein localises to the cytoplasm. It catalyses the reaction cytidine(34) in elongator tRNA(Met) + acetate + ATP = N(4)-acetylcytidine(34) in elongator tRNA(Met) + AMP + diphosphate. In terms of biological role, catalyzes the formation of N(4)-acetylcytidine (ac(4)C) at the wobble position of elongator tRNA(Met), using acetate and ATP as substrates. First activates an acetate ion to form acetyladenylate (Ac-AMP) and then transfers the acetyl group to tRNA to form ac(4)C34. The polypeptide is tRNA(Met) cytidine acetate ligase (Clostridium botulinum (strain Kyoto / Type A2)).